Reading from the N-terminus, the 62-residue chain is MIIAIQLLVLLLITLSTILVVGVPVVLASPGQWEQSKGLIYTGAGLWTGLVIVTSLVNSLVV.

A run of 2 helical transmembrane segments spans residues 8–28 and 41–61; these read LVLL…VVLA and YTGA…NSLV.

This sequence belongs to the PsbZ family. As to quaternary structure, PSII is composed of 1 copy each of membrane proteins PsbA, PsbB, PsbC, PsbD, PsbE, PsbF, PsbH, PsbI, PsbJ, PsbK, PsbL, PsbM, PsbT, PsbX, PsbY, PsbZ, Psb30/Ycf12, at least 3 peripheral proteins of the oxygen-evolving complex and a large number of cofactors. It forms dimeric complexes.

It is found in the plastid. The protein resides in the chloroplast thylakoid membrane. Its function is as follows. May control the interaction of photosystem II (PSII) cores with the light-harvesting antenna, regulates electron flow through the 2 photosystem reaction centers. PSII is a light-driven water plastoquinone oxidoreductase, using light energy to abstract electrons from H(2)O, generating a proton gradient subsequently used for ATP formation. This Porphyra purpurea (Red seaweed) protein is Photosystem II reaction center protein Z.